The sequence spans 485 residues: NADH-quinone oxidoreductase subunit N (485 aa).

Transmembrane regions (helical) follow at residues 8 to 28, 35 to 55, 71 to 91, 105 to 125, 127 to 147, 159 to 179, 203 to 223, 235 to 255, 271 to 291, 297 to 317, 326 to 346, 373 to 393, 408 to 430, and 450 to 470; these read LIAL…MLSI, FLNA…LWFV, GFAM…CTFA, FYLL…ANHL, SLFL…GYAF, YTIL…LVYA, LLAG…LVPF, PAPV…GVVM, VVLA…ALSQ, LLGY…IALQ, VGVY…VVSL, AAVM…LGFI, WWLV…RVAV, and YSAG…LGVW.

Belongs to the complex I subunit 2 family. In terms of assembly, NDH-1 is composed of 13 different subunits. Subunits NuoA, H, J, K, L, M, N constitute the membrane sector of the complex.

Its subcellular location is the cell inner membrane. It carries out the reaction a quinone + NADH + 5 H(+)(in) = a quinol + NAD(+) + 4 H(+)(out). In terms of biological role, NDH-1 shuttles electrons from NADH, via FMN and iron-sulfur (Fe-S) centers, to quinones in the respiratory chain. The immediate electron acceptor for the enzyme in this species is believed to be ubiquinone. Couples the redox reaction to proton translocation (for every two electrons transferred, four hydrogen ions are translocated across the cytoplasmic membrane), and thus conserves the redox energy in a proton gradient. The polypeptide is NADH-quinone oxidoreductase subunit N (Shigella boydii serotype 4 (strain Sb227)).